Reading from the N-terminus, the 174-residue chain is Probable E3 ubiquitin-protein ligase RHA4A (174 aa).

Residues C105–R147 form an RING-type; atypical zinc finger. The disordered stretch occupies residues T155 to V174.

Expressed in stems, flowers, cauline leaves and roots.

It catalyses the reaction S-ubiquitinyl-[E2 ubiquitin-conjugating enzyme]-L-cysteine + [acceptor protein]-L-lysine = [E2 ubiquitin-conjugating enzyme]-L-cysteine + N(6)-ubiquitinyl-[acceptor protein]-L-lysine.. The protein operates within protein modification; protein ubiquitination. Its function is as follows. Probable E3 ubiquitin-protein ligase that may possess E3 ubiquitin ligase activity in vitro. The sequence is that of Probable E3 ubiquitin-protein ligase RHA4A from Arabidopsis thaliana (Mouse-ear cress).